Consider the following 347-residue polypeptide: NADH-ubiquinone oxidoreductase chain 2 (347 aa).

Transmembrane regions (helical) follow at residues I13–L33, A56–F76, L96–P116, P123–Y143, L149–G169, I178–P198, T201–L221, T247–I267, N274–L294, and L326–I346.

Belongs to the complex I subunit 2 family. In terms of assembly, core subunit of respiratory chain NADH dehydrogenase (Complex I) which is composed of 45 different subunits. Interacts with TMEM242.

The protein localises to the mitochondrion inner membrane. It catalyses the reaction a ubiquinone + NADH + 5 H(+)(in) = a ubiquinol + NAD(+) + 4 H(+)(out). Its function is as follows. Core subunit of the mitochondrial membrane respiratory chain NADH dehydrogenase (Complex I) which catalyzes electron transfer from NADH through the respiratory chain, using ubiquinone as an electron acceptor. Essential for the catalytic activity and assembly of complex I. The polypeptide is NADH-ubiquinone oxidoreductase chain 2 (Homo sapiens (Human)).